The following is a 577-amino-acid chain: Methionine--tRNA ligase (577 aa).

The short motif at 21 to 31 (PYANGPLHVGH) is the 'HIGH' region element. Residues C153, C156, C166, and C169 each contribute to the Zn(2+) site. A 'KMSKS' region motif is present at residues 355-359 (QMSTS). Residue T358 coordinates ATP.

The protein belongs to the class-I aminoacyl-tRNA synthetase family. MetG type 1 subfamily. In terms of assembly, monomer. Requires Zn(2+) as cofactor.

It localises to the cytoplasm. It catalyses the reaction tRNA(Met) + L-methionine + ATP = L-methionyl-tRNA(Met) + AMP + diphosphate. Functionally, is required not only for elongation of protein synthesis but also for the initiation of all mRNA translation through initiator tRNA(fMet) aminoacylation. This Rubrobacter xylanophilus (strain DSM 9941 / JCM 11954 / NBRC 16129 / PRD-1) protein is Methionine--tRNA ligase.